The sequence spans 181 residues: Large ribosomal subunit protein uL5 (181 aa).

The protein belongs to the universal ribosomal protein uL5 family. As to quaternary structure, part of the 50S ribosomal subunit; part of the 5S rRNA/L5/L18/L25 subcomplex. Contacts the 5S rRNA and the P site tRNA. Forms a bridge to the 30S subunit in the 70S ribosome.

Functionally, this is one of the proteins that bind and probably mediate the attachment of the 5S RNA into the large ribosomal subunit, where it forms part of the central protuberance. In the 70S ribosome it contacts protein S13 of the 30S subunit (bridge B1b), connecting the 2 subunits; this bridge is implicated in subunit movement. Contacts the P site tRNA; the 5S rRNA and some of its associated proteins might help stabilize positioning of ribosome-bound tRNAs. In Picosynechococcus sp. (strain ATCC 27264 / PCC 7002 / PR-6) (Agmenellum quadruplicatum), this protein is Large ribosomal subunit protein uL5.